Consider the following 491-residue polypeptide: Cytochrome P450 2B9 (491 aa).

Position 128 is a phosphoserine; by PKA (serine 128). Cysteine 436 provides a ligand contact to heme.

This sequence belongs to the cytochrome P450 family. It depends on heme as a cofactor.

It localises to the endoplasmic reticulum membrane. Its subcellular location is the microsome membrane. The catalysed reaction is an organic molecule + reduced [NADPH--hemoprotein reductase] + O2 = an alcohol + oxidized [NADPH--hemoprotein reductase] + H2O + H(+). Functionally, cytochromes P450 are a group of heme-thiolate monooxygenases. In liver microsomes, this enzyme is involved in an NADPH-dependent electron transport pathway. It oxidizes a variety of structurally unrelated compounds, including steroids, fatty acids, and xenobiotics. This is Cytochrome P450 2B9 (Cyp2b9) from Mus musculus (Mouse).